A 221-amino-acid chain; its full sequence is MAYRDQSLGELAIAIPRATKLFRELNLDFCCGGKQTLSRAAGKKDLNIDELEAQLEKLAAQPSDARDWREAPLADIIAYIIPRFHDRHREQLPELILMAEKVERVHHDKADCPHGLANQLTAIYNELSQHMMKEERILFPMIGQGMGANAAAPISVMEHEHDDAGRDVEVVKELTHGVVPPEGACNTWRALYSGINEFITDLMEHIHLENNLLFPRALRGE.

The protein belongs to the RIC family. YtfE subfamily. Homodimer.

Its subcellular location is the cytoplasm. Di-iron-containing protein involved in the repair of iron-sulfur clusters damaged by oxidative and nitrosative stress conditions. This chain is Iron-sulfur cluster repair protein YtfE, found in Pectobacterium carotovorum subsp. carotovorum (strain PC1).